The chain runs to 439 residues: Serine hydroxymethyltransferase (439 aa).

A disordered region spans residues 1 to 20 (MNAPHRDETTASHRDDGFFT). Residues leucine 136 and 140 to 142 (GHL) each bind (6S)-5,6,7,8-tetrahydrofolate. Lysine 245 is modified (N6-(pyridoxal phosphate)lysine).

It belongs to the SHMT family. As to quaternary structure, homodimer. Requires pyridoxal 5'-phosphate as cofactor.

The protein localises to the cytoplasm. It catalyses the reaction (6R)-5,10-methylene-5,6,7,8-tetrahydrofolate + glycine + H2O = (6S)-5,6,7,8-tetrahydrofolate + L-serine. Its pathway is one-carbon metabolism; tetrahydrofolate interconversion. It participates in amino-acid biosynthesis; glycine biosynthesis; glycine from L-serine: step 1/1. Its function is as follows. Catalyzes the reversible interconversion of serine and glycine with tetrahydrofolate (THF) serving as the one-carbon carrier. This reaction serves as the major source of one-carbon groups required for the biosynthesis of purines, thymidylate, methionine, and other important biomolecules. Also exhibits THF-independent aldolase activity toward beta-hydroxyamino acids, producing glycine and aldehydes, via a retro-aldol mechanism. In Jannaschia sp. (strain CCS1), this protein is Serine hydroxymethyltransferase.